The primary structure comprises 133 residues: Peptide methionine sulfoxide reductase MsrB (133 aa).

Positions 8–130 constitute a MsrB domain; it reads LEEWRAMLDP…NSVCLDFKPR (123 aa). The Zn(2+) site is built by C47, C50, C96, and C99. Catalysis depends on C119, which acts as the Nucleophile.

Belongs to the MsrB Met sulfoxide reductase family. Requires Zn(2+) as cofactor.

The catalysed reaction is L-methionyl-[protein] + [thioredoxin]-disulfide + H2O = L-methionyl-(R)-S-oxide-[protein] + [thioredoxin]-dithiol. This is Peptide methionine sulfoxide reductase MsrB from Pseudomonas putida (strain W619).